Consider the following 216-residue polypeptide: MSELKIKAAKAAIAYIEDDMVIGVGTGSTVNFFIKELAAIKHKIEACVASSKATEALLRAEGIPVIDLNSVQDLPIYVDGADEVNERGEMIKGGGGALTREKIVANVATQFICIVDESKVVKRLGEFPVAVEVVPMARSFVARQIVKLGGDPEYREGFVTDNGNIILDVFNLNFSTPMALEDSLNVIPGVVENGVFAKRLADKVLVASASGVNNLK.

Substrate contacts are provided by residues 26–29 (TGST), 79–82 (DGAD), and 92–95 (KGGG). The active-site Proton acceptor is the E101. Substrate is bound at residue K119.

Belongs to the ribose 5-phosphate isomerase family. In terms of assembly, homodimer.

It catalyses the reaction aldehydo-D-ribose 5-phosphate = D-ribulose 5-phosphate. Its pathway is carbohydrate degradation; pentose phosphate pathway; D-ribose 5-phosphate from D-ribulose 5-phosphate (non-oxidative stage): step 1/1. Catalyzes the reversible conversion of ribose-5-phosphate to ribulose 5-phosphate. The chain is Ribose-5-phosphate isomerase A from Legionella pneumophila (strain Paris).